Reading from the N-terminus, the 408-residue chain is Arginine biosynthesis bifunctional protein ArgJ (408 aa).

Residues Thr-162, Lys-188, Thr-199, Glu-280, Asn-403, and Ser-408 each contribute to the substrate site. The active-site Nucleophile is Thr-199.

It belongs to the ArgJ family. Heterotetramer of two alpha and two beta chains.

The protein resides in the cytoplasm. It catalyses the reaction N(2)-acetyl-L-ornithine + L-glutamate = N-acetyl-L-glutamate + L-ornithine. The enzyme catalyses L-glutamate + acetyl-CoA = N-acetyl-L-glutamate + CoA + H(+). It participates in amino-acid biosynthesis; L-arginine biosynthesis; L-ornithine and N-acetyl-L-glutamate from L-glutamate and N(2)-acetyl-L-ornithine (cyclic): step 1/1. Its pathway is amino-acid biosynthesis; L-arginine biosynthesis; N(2)-acetyl-L-ornithine from L-glutamate: step 1/4. In terms of biological role, catalyzes two activities which are involved in the cyclic version of arginine biosynthesis: the synthesis of N-acetylglutamate from glutamate and acetyl-CoA as the acetyl donor, and of ornithine by transacetylation between N(2)-acetylornithine and glutamate. The chain is Arginine biosynthesis bifunctional protein ArgJ from Ruegeria pomeroyi (strain ATCC 700808 / DSM 15171 / DSS-3) (Silicibacter pomeroyi).